The sequence spans 129 residues: Glycine cleavage system H protein (129 aa).

Residues 24-106 (TYTVGITEHA…YVGGWIFKIK (83 aa)) form the Lipoyl-binding domain. N6-lipoyllysine is present on Lys65.

Belongs to the GcvH family. In terms of assembly, the glycine cleavage system is composed of four proteins: P, T, L and H. (R)-lipoate serves as cofactor.

The glycine cleavage system catalyzes the degradation of glycine. The H protein shuttles the methylamine group of glycine from the P protein to the T protein. The chain is Glycine cleavage system H protein from Salmonella paratyphi B (strain ATCC BAA-1250 / SPB7).